We begin with the raw amino-acid sequence, 498 residues long: ATP synthase subunit beta, chloroplastic (498 aa).

Residue 172 to 179 (GGAGVGKT) participates in ATP binding.

It belongs to the ATPase alpha/beta chains family. In terms of assembly, F-type ATPases have 2 components, CF(1) - the catalytic core - and CF(0) - the membrane proton channel. CF(1) has five subunits: alpha(3), beta(3), gamma(1), delta(1), epsilon(1). CF(0) has four main subunits: a(1), b(1), b'(1) and c(9-12).

Its subcellular location is the plastid. It localises to the chloroplast thylakoid membrane. The catalysed reaction is ATP + H2O + 4 H(+)(in) = ADP + phosphate + 5 H(+)(out). Its function is as follows. Produces ATP from ADP in the presence of a proton gradient across the membrane. The catalytic sites are hosted primarily by the beta subunits. The chain is ATP synthase subunit beta, chloroplastic from Liriodendron tulipifera (Tuliptree).